A 257-amino-acid chain; its full sequence is Aspartate/glutamate leucyltransferase (257 aa).

Belongs to the R-transferase family. Bpt subfamily.

The protein resides in the cytoplasm. It catalyses the reaction N-terminal L-glutamyl-[protein] + L-leucyl-tRNA(Leu) = N-terminal L-leucyl-L-glutamyl-[protein] + tRNA(Leu) + H(+). The catalysed reaction is N-terminal L-aspartyl-[protein] + L-leucyl-tRNA(Leu) = N-terminal L-leucyl-L-aspartyl-[protein] + tRNA(Leu) + H(+). Its function is as follows. Functions in the N-end rule pathway of protein degradation where it conjugates Leu from its aminoacyl-tRNA to the N-termini of proteins containing an N-terminal aspartate or glutamate. This chain is Aspartate/glutamate leucyltransferase, found in Nitrobacter winogradskyi (strain ATCC 25391 / DSM 10237 / CIP 104748 / NCIMB 11846 / Nb-255).